We begin with the raw amino-acid sequence, 362 residues long: Methionine import ATP-binding protein MetN (362 aa).

One can recognise an ABC transporter domain in the interval 23 to 258 (VRLTDVKRRF…PQAEITGSLL (236 aa)). Position 55-62 (55-62 (GRSGAGKS)) interacts with ATP.

Belongs to the ABC transporter superfamily. Methionine importer (TC 3.A.1.24) family. In terms of assembly, the complex is composed of two ATP-binding proteins (MetN), two transmembrane proteins (MetI) and a solute-binding protein (MetQ).

The protein resides in the cell inner membrane. The catalysed reaction is L-methionine(out) + ATP + H2O = L-methionine(in) + ADP + phosphate + H(+). It catalyses the reaction D-methionine(out) + ATP + H2O = D-methionine(in) + ADP + phosphate + H(+). Its function is as follows. Part of the ABC transporter complex MetNIQ involved in methionine import. Responsible for energy coupling to the transport system. The sequence is that of Methionine import ATP-binding protein MetN from Rhizobium johnstonii (strain DSM 114642 / LMG 32736 / 3841) (Rhizobium leguminosarum bv. viciae).